The primary structure comprises 248 residues: Type III pantothenate kinase (248 aa).

An ATP-binding site is contributed by 8–15 (DAGNTRTK). Substrate contacts are provided by residues tyrosine 87 and 94–97 (GVDR). Aspartate 96 functions as the Proton acceptor in the catalytic mechanism. Threonine 119 provides a ligand contact to ATP. A substrate-binding site is contributed by threonine 173.

This sequence belongs to the type III pantothenate kinase family. Homodimer. NH4(+) serves as cofactor. The cofactor is K(+).

Its subcellular location is the cytoplasm. The enzyme catalyses (R)-pantothenate + ATP = (R)-4'-phosphopantothenate + ADP + H(+). It participates in cofactor biosynthesis; coenzyme A biosynthesis; CoA from (R)-pantothenate: step 1/5. In terms of biological role, catalyzes the phosphorylation of pantothenate (Pan), the first step in CoA biosynthesis. This chain is Type III pantothenate kinase, found in Methylobacillus flagellatus (strain ATCC 51484 / DSM 6875 / VKM B-1610 / KT).